Here is a 90-residue protein sequence, read N- to C-terminus: Small ribosomal subunit protein bS16 (90 aa).

It belongs to the bacterial ribosomal protein bS16 family.

The chain is Small ribosomal subunit protein bS16 from Bacillus pumilus (strain SAFR-032).